The following is a 110-amino-acid chain: NADH-quinone oxidoreductase subunit K (110 aa).

Helical transmembrane passes span 7 to 27 (LGSY…GVFV), 31 to 51 (IIAI…NFIA), and 73 to 93 (IFVI…VIAI).

Belongs to the complex I subunit 4L family. NDH-1 is composed of 14 different subunits. Subunits NuoA, H, J, K, L, M, N constitute the membrane sector of the complex.

It is found in the cell membrane. The catalysed reaction is a quinone + NADH + 5 H(+)(in) = a quinol + NAD(+) + 4 H(+)(out). Its function is as follows. NDH-1 shuttles electrons from NADH, via FMN and iron-sulfur (Fe-S) centers, to quinones in the respiratory chain. The immediate electron acceptor for the enzyme in this species is believed to be a menaquinone. Couples the redox reaction to proton translocation (for every two electrons transferred, four hydrogen ions are translocated across the cytoplasmic membrane), and thus conserves the redox energy in a proton gradient. The protein is NADH-quinone oxidoreductase subunit K of Desulfitobacterium hafniense (strain DSM 10664 / DCB-2).